Consider the following 356-residue polypeptide: Glutamine synthetase N-1 (356 aa).

The 81-residue stretch at 19-99 (VIAEYIWVGG…VMCDAYTPAG (81 aa)) folds into the GS beta-grasp domain. In terms of domain architecture, GS catalytic spans 106–356 (KRHNAAKIFS…IAETTLLWKP (251 aa)).

It belongs to the glutamine synthetase family. Homooctamer. In terms of tissue distribution, this is a nodule isozyme.

Its subcellular location is the cytoplasm. The enzyme catalyses L-glutamate + NH4(+) + ATP = L-glutamine + ADP + phosphate + H(+). The protein is Glutamine synthetase N-1 (Gln-gamma) of Phaseolus vulgaris (Kidney bean).